We begin with the raw amino-acid sequence, 664 residues long: MNKQNNYSDDSIQVLEGLEAVRKRPGMYIGSTDKRGLHHLVYEVVDNSVDEVLNGYGDAITVTINQDGSISIEDNGRGMPTGIHASGKPTAEVIFTVLHAGGKFGQGGYKTSGGLHGVGASVVNALSEWLEVEIHRDGNIYTQNFKNGGIPATGLVKTGKTKKTGTKVTFKPDSEIFKSTTTFNFDILSERLQESAFLLKDLKITLTDLRSGKEREEIYHYEEGIKEFVSYVNEGKEVLHDVTTFAGHSNGIEVDVAFQYNDQYSESILSFVNNVRTKDGGTHEVGFKTAMTRVFNEYARRINELKDKDKNLDGNDIREGLTAIISVRIPEELLQFEGQTKSKLGTSEARSAVDSVVSEKLPYYLEEKGQLSKSLVKKAIKAQQAREAARKAREDARSGKKNKRKDTLLSGKLTPAQSKNTDKNELYLVEGDSAGGSAKLGRDRKFQAILPLRGKVINTEKARLEDIFKNEEINTIIHTIGAGVGTDFKIEDSNYNRIIIMTDADTDGAHIQVLLLTFFFKYMKPLVQAGRVFIALPPLYKLEKGKGKNKKVEYAWTDEELENLQKQLGKGFILQRYKGLGEMNPEQLWETTMNPETRTLIRVQVEDEVRSSKRVTTLMGDKVAPRREWIEKHVEFGMQEDQSILDNKEVQILENEKYIEEETN.

ATP-binding positions include tyrosine 7, asparagine 47, aspartate 74, 114–120, and lysine 341; that span reads GLHGVGA. The disordered stretch occupies residues 386 to 418; sequence REAARKAREDARSGKKNKRKDTLLSGKLTPAQS. The span at 387-398 shows a compositional bias: basic and acidic residues; sequence EAARKAREDARS. The 115-residue stretch at 424–538 folds into the Toprim domain; the sequence is NELYLVEGDS…AGRVFIALPP (115 aa). The Mg(2+) site is built by glutamate 430, aspartate 503, and aspartate 505.

The protein belongs to the type II topoisomerase family. ParE type 2 subfamily. In terms of assembly, heterotetramer composed of ParC and ParE. The cofactor is Mg(2+). Requires Mn(2+) as cofactor. It depends on Ca(2+) as a cofactor.

It carries out the reaction ATP-dependent breakage, passage and rejoining of double-stranded DNA.. Functionally, topoisomerase IV is essential for chromosome segregation. It relaxes supercoiled DNA. Performs the decatenation events required during the replication of a circular DNA molecule. This chain is DNA topoisomerase 4 subunit B, found in Staphylococcus epidermidis (strain ATCC 35984 / DSM 28319 / BCRC 17069 / CCUG 31568 / BM 3577 / RP62A).